We begin with the raw amino-acid sequence, 240 residues long: UDP-2,3-diacylglucosamine hydrolase (240 aa).

5 residues coordinate Mn(2+): Asp-8, His-10, Asp-41, Asn-79, and His-114. 79–80 (NR) is a substrate binding site. Asp-122, Ser-160, Asn-164, Lys-167, and His-195 together coordinate substrate. Residues His-195 and His-197 each coordinate Mn(2+).

Belongs to the LpxH family. The cofactor is Mn(2+).

It localises to the cell inner membrane. The catalysed reaction is UDP-2-N,3-O-bis[(3R)-3-hydroxytetradecanoyl]-alpha-D-glucosamine + H2O = 2-N,3-O-bis[(3R)-3-hydroxytetradecanoyl]-alpha-D-glucosaminyl 1-phosphate + UMP + 2 H(+). It functions in the pathway glycolipid biosynthesis; lipid IV(A) biosynthesis; lipid IV(A) from (3R)-3-hydroxytetradecanoyl-[acyl-carrier-protein] and UDP-N-acetyl-alpha-D-glucosamine: step 4/6. In terms of biological role, hydrolyzes the pyrophosphate bond of UDP-2,3-diacylglucosamine to yield 2,3-diacylglucosamine 1-phosphate (lipid X) and UMP by catalyzing the attack of water at the alpha-P atom. Involved in the biosynthesis of lipid A, a phosphorylated glycolipid that anchors the lipopolysaccharide to the outer membrane of the cell. The protein is UDP-2,3-diacylglucosamine hydrolase of Salmonella paratyphi A (strain ATCC 9150 / SARB42).